The sequence spans 34 residues: Antimicrobial peptide Alo-2 (34 aa).

3 disulfides stabilise this stretch: C1–C18, C8–C22, and C17–C33.

It is found in the secreted. Its function is as follows. Has antifungal activity against C.glabrata. The sequence is that of Antimicrobial peptide Alo-2 from Acrocinus longimanus (Giant harlequin beetle).